The primary structure comprises 228 residues: uncharacterized protein (228 aa).

This is an uncharacterized protein from Rickettsia prowazekii (strain Madrid E).